The primary structure comprises 365 residues: Peptide chain release factor 2 (365 aa).

N5-methylglutamine is present on glutamine 252.

The protein belongs to the prokaryotic/mitochondrial release factor family. In terms of processing, methylated by PrmC. Methylation increases the termination efficiency of RF2.

The protein resides in the cytoplasm. Peptide chain release factor 2 directs the termination of translation in response to the peptide chain termination codons UGA and UAA. The sequence is that of Peptide chain release factor 2 from Pseudoalteromonas translucida (strain TAC 125).